Here is a 91-residue protein sequence, read N- to C-terminus: UPF0358 protein Sca_0738 (91 aa).

The protein belongs to the UPF0358 family.

The polypeptide is UPF0358 protein Sca_0738 (Staphylococcus carnosus (strain TM300)).